Consider the following 127-residue polypeptide: Protein ApaG (127 aa).

The region spanning 3 to 127 is the ApaG domain; the sequence is KSETYRIEVE…FMLAMPRVLH (125 aa).

In Azoarcus sp. (strain BH72), this protein is Protein ApaG.